A 345-amino-acid polypeptide reads, in one-letter code: MLTPRAEIILRSIVRQYITKAVPVSSSSILEDCGLDICSATIRNEVVRLETEGYILRPHHSAGSIPADKGYRYYVESLKDVELPTNDKFLIRHLFHQVEKEMEEWLNLTVAVLSQRVQSMAVVTMPRQTQGKVHHIELVSLQDNLVLVVLILRGAKVKQQLINFENTVSQPELTLISNRLNDAYAGLTRFQIEQKTLNLNPDELKVKDSLIKMMRGEDEQESREPFFDGLHYMLEQPEFHQNQRVQEIMQLLEQKKLSKMIAPPSPFNRGVQVYIGQENASAEIRDYSLIVSQYGIPDEAVGTIGVIGPTRMAYERALSAVSYLSLVMSTLVAELYGKPPGGKDE.

The protein belongs to the HrcA family.

In terms of biological role, negative regulator of class I heat shock genes (grpE-dnaK-dnaJ and groELS operons). Prevents heat-shock induction of these operons. This is Heat-inducible transcription repressor HrcA from Dehalococcoides mccartyi (strain ATCC BAA-2266 / KCTC 15142 / 195) (Dehalococcoides ethenogenes (strain 195)).